Consider the following 144-residue polypeptide: UPF0735 ACT domain-containing protein LCABL_12100 (144 aa).

One can recognise an ACT domain in the interval 68–143 (VISLMLHHDR…GVSDVHLVSV (76 aa)).

It belongs to the UPF0735 family.

The protein is UPF0735 ACT domain-containing protein LCABL_12100 of Lacticaseibacillus casei (strain BL23) (Lactobacillus casei).